Reading from the N-terminus, the 503-residue chain is Probable cytosol aminopeptidase (503 aa).

Residues Lys-270 and Asp-275 each coordinate Mn(2+). The active site involves Lys-282. Mn(2+)-binding residues include Asp-293, Asp-352, and Glu-354. The active site involves Arg-356.

This sequence belongs to the peptidase M17 family. Requires Mn(2+) as cofactor.

Its subcellular location is the cytoplasm. The enzyme catalyses Release of an N-terminal amino acid, Xaa-|-Yaa-, in which Xaa is preferably Leu, but may be other amino acids including Pro although not Arg or Lys, and Yaa may be Pro. Amino acid amides and methyl esters are also readily hydrolyzed, but rates on arylamides are exceedingly low.. The catalysed reaction is Release of an N-terminal amino acid, preferentially leucine, but not glutamic or aspartic acids.. Its function is as follows. Presumably involved in the processing and regular turnover of intracellular proteins. Catalyzes the removal of unsubstituted N-terminal amino acids from various peptides. The polypeptide is Probable cytosol aminopeptidase (Escherichia coli O139:H28 (strain E24377A / ETEC)).